The primary structure comprises 671 residues: DNA ligase (671 aa).

Residues 32–36 (DAEYD), 81–82 (SL), and Glu113 contribute to the NAD(+) site. The N6-AMP-lysine intermediate role is filled by Lys115. Residues Arg136, Glu173, Lys290, and Lys314 each contribute to the NAD(+) site. 4 residues coordinate Zn(2+): Cys408, Cys411, Cys426, and Cys432. In terms of domain architecture, BRCT spans 593–671 (EIDSPFAGKT…EAEMLRLLGS (79 aa)).

It belongs to the NAD-dependent DNA ligase family. LigA subfamily. The cofactor is Mg(2+). It depends on Mn(2+) as a cofactor.

It carries out the reaction NAD(+) + (deoxyribonucleotide)n-3'-hydroxyl + 5'-phospho-(deoxyribonucleotide)m = (deoxyribonucleotide)n+m + AMP + beta-nicotinamide D-nucleotide.. Its function is as follows. DNA ligase that catalyzes the formation of phosphodiester linkages between 5'-phosphoryl and 3'-hydroxyl groups in double-stranded DNA using NAD as a coenzyme and as the energy source for the reaction. It is essential for DNA replication and repair of damaged DNA. The chain is DNA ligase from Escherichia coli O157:H7.